The primary structure comprises 175 residues: Protein OPG036 (175 aa).

The protein belongs to the poxviridae OPG036 family.

It is found in the host nucleus. Functionally, plays a role in the inhibition of host innate immune response. Within the host nucleus, inhibits activation of interferon-beta promoter by inhibiting IRF3 activation. This Bos taurus (Bovine) protein is Protein OPG036 (OPG036).